A 524-amino-acid chain; its full sequence is Alkaline phosphatase, tissue-nonspecific isozyme (524 aa).

The N-terminal stretch at 1-17 (MISPFLLLAIGTCFASS) is a signal peptide. Residue Asp-60 coordinates Mg(2+). Zn(2+) contacts are provided by Asp-60 and Ser-110. The Phosphoserine intermediate role is filled by Ser-110. Residue Ser-110 is modified to Phosphoserine. Cys-139 and Cys-201 are disulfide-bonded. Asn-140 is a glycosylation site (N-linked (GlcNAc...) asparagine). A Mg(2+)-binding site is contributed by Thr-173. A glycan (N-linked (GlcNAc...) asparagine) is linked at Asn-230. Glu-235 serves as a coordination point for Ca(2+). The N-linked (GlcNAc...) asparagine glycan is linked to Asn-271. Ca(2+)-binding residues include Phe-290 and Glu-291. Asn-303 carries N-linked (GlcNAc...) asparagine glycosylation. Asp-306 provides a ligand contact to Ca(2+). Mg(2+) is bound at residue Glu-332. Asp-337, His-341, Asp-378, and His-379 together coordinate Zn(2+). N-linked (GlcNAc...) asparagine glycosylation is present at Asn-430. His-454 serves as a coordination point for Zn(2+). An intrachain disulfide couples Cys-489 to Cys-497. A lipid anchor (GPI-anchor amidated serine) is attached at Ser-499. Positions 500 to 524 (ASSSGSPSPGPLLLLLALLPLGSLF) are cleaved as a propeptide — removed in mature form.

This sequence belongs to the alkaline phosphatase family. Homodimer. Requires Mg(2+) as cofactor. It depends on Zn(2+) as a cofactor. The cofactor is Ca(2+). In terms of processing, N-glycosylated.

The protein localises to the cell membrane. It is found in the extracellular vesicle membrane. The protein resides in the mitochondrion membrane. Its subcellular location is the mitochondrion intermembrane space. The catalysed reaction is a phosphate monoester + H2O = an alcohol + phosphate. It carries out the reaction diphosphate + H2O = 2 phosphate + H(+). The enzyme catalyses pyridoxal 5'-phosphate + H2O = pyridoxal + phosphate. It catalyses the reaction phosphoethanolamine + H2O = ethanolamine + phosphate. The catalysed reaction is N-phosphocreatine + H2O = creatine + phosphate. It carries out the reaction ATP + H2O = ADP + phosphate + H(+). The enzyme catalyses ADP + H2O = AMP + phosphate + H(+). It catalyses the reaction AMP + H2O = adenosine + phosphate. Its activity is regulated as follows. Phosphatase activity is specifically inhibited by 5-((5-chloro-2-methoxyphenyl)sulfonamido)nicotinamide (SBI-425). Functionally, alkaline phosphatase that metabolizes various phosphate compounds and plays a key role in skeletal mineralization and adaptive thermogenesis. Has broad substrate specificity and can hydrolyze a considerable variety of compounds: however, only a few substrates, such as diphosphate (inorganic pyrophosphate; PPi), pyridoxal 5'-phosphate (PLP) and N-phosphocreatine are natural substrates. Plays an essential role in skeletal and dental mineralization via its ability to hydrolyze extracellular diphosphate, a potent mineralization inhibitor, to phosphate: it thereby promotes hydroxyapatite crystal formation and increases inorganic phosphate concentration. Acts in a non-redundant manner with PHOSPHO1 in skeletal mineralization: while PHOSPHO1 mediates the initiation of hydroxyapatite crystallization in the matrix vesicles (MVs), ALPL/TNAP catalyzes the spread of hydroxyapatite crystallization in the extracellular matrix. Also promotes dephosphorylation of osteopontin (SSP1), an inhibitor of hydroxyapatite crystallization in its phosphorylated state; it is however unclear whether ALPL/TNAP mediates SSP1 dephosphorylation via a direct or indirect manner. Catalyzes dephosphorylation of PLP to pyridoxal (PL), the transportable form of vitamin B6, in order to provide a sufficient amount of PLP in the brain, an essential cofactor for enzymes catalyzing the synthesis of diverse neurotransmitters. Additionally, also able to mediate ATP degradation in a stepwise manner to adenosine, thereby regulating the availability of ligands for purinergic receptors. Also capable of dephosphorylating microbial products, such as lipopolysaccharides (LPS) as well as other phosphorylated small-molecules, such as poly-inosine:cytosine (poly I:C). Acts as a key regulator of adaptive thermogenesis as part of the futile creatine cycle: localizes to the mitochondria of thermogenic fat cells and acts by mediating hydrolysis of N-phosphocreatine to initiate a futile cycle of creatine dephosphorylation and phosphorylation. During the futile creatine cycle, creatine and N-phosphocreatine are in a futile cycle, which dissipates the high energy charge of N-phosphocreatine as heat without performing any mechanical or chemical work. This chain is Alkaline phosphatase, tissue-nonspecific isozyme (ALPL), found in Bos taurus (Bovine).